Here is a 500-residue protein sequence, read N- to C-terminus: Probable malate:quinone oxidoreductase (500 aa).

The protein belongs to the MQO family. It depends on FAD as a cofactor.

It carries out the reaction (S)-malate + a quinone = a quinol + oxaloacetate. The protein operates within carbohydrate metabolism; tricarboxylic acid cycle; oxaloacetate from (S)-malate (quinone route): step 1/1. This Bacillus thuringiensis (strain Al Hakam) protein is Probable malate:quinone oxidoreductase.